A 442-amino-acid polypeptide reads, in one-letter code: Putative aminohydrolase SsnA (442 aa).

4 residues coordinate Zn(2+): H62, H64, H227, and D312.

Belongs to the metallo-dependent hydrolases superfamily. ATZ/TRZ family.

In Escherichia coli (strain K12), this protein is Putative aminohydrolase SsnA (ssnA).